Here is a 258-residue protein sequence, read N- to C-terminus: Imidazole glycerol phosphate synthase subunit HisF (258 aa).

Catalysis depends on residues Asp11 and Asp130.

The protein belongs to the HisA/HisF family. Heterodimer of HisH and HisF.

The protein localises to the cytoplasm. The catalysed reaction is 5-[(5-phospho-1-deoxy-D-ribulos-1-ylimino)methylamino]-1-(5-phospho-beta-D-ribosyl)imidazole-4-carboxamide + L-glutamine = D-erythro-1-(imidazol-4-yl)glycerol 3-phosphate + 5-amino-1-(5-phospho-beta-D-ribosyl)imidazole-4-carboxamide + L-glutamate + H(+). Its pathway is amino-acid biosynthesis; L-histidine biosynthesis; L-histidine from 5-phospho-alpha-D-ribose 1-diphosphate: step 5/9. Functionally, IGPS catalyzes the conversion of PRFAR and glutamine to IGP, AICAR and glutamate. The HisF subunit catalyzes the cyclization activity that produces IGP and AICAR from PRFAR using the ammonia provided by the HisH subunit. This is Imidazole glycerol phosphate synthase subunit HisF from Shigella boydii serotype 18 (strain CDC 3083-94 / BS512).